We begin with the raw amino-acid sequence, 255 residues long: Indole-3-glycerol phosphate synthase (255 aa).

It belongs to the TrpC family.

It carries out the reaction 1-(2-carboxyphenylamino)-1-deoxy-D-ribulose 5-phosphate + H(+) = (1S,2R)-1-C-(indol-3-yl)glycerol 3-phosphate + CO2 + H2O. Its pathway is amino-acid biosynthesis; L-tryptophan biosynthesis; L-tryptophan from chorismate: step 4/5. The chain is Indole-3-glycerol phosphate synthase from Streptococcus thermophilus (strain ATCC BAA-250 / LMG 18311).